Reading from the N-terminus, the 575-residue chain is Isocitrate dehydrogenase kinase/phosphatase (575 aa).

Residues 315–321 (APGIRGM) and Lys-336 contribute to the ATP site. The active site involves Asp-371.

It belongs to the AceK family.

The protein localises to the cytoplasm. It carries out the reaction L-seryl-[isocitrate dehydrogenase] + ATP = O-phospho-L-seryl-[isocitrate dehydrogenase] + ADP + H(+). In terms of biological role, bifunctional enzyme which can phosphorylate or dephosphorylate isocitrate dehydrogenase (IDH) on a specific serine residue. This is a regulatory mechanism which enables bacteria to bypass the Krebs cycle via the glyoxylate shunt in response to the source of carbon. When bacteria are grown on glucose, IDH is fully active and unphosphorylated, but when grown on acetate or ethanol, the activity of IDH declines drastically concomitant with its phosphorylation. This Citrobacter koseri (strain ATCC BAA-895 / CDC 4225-83 / SGSC4696) protein is Isocitrate dehydrogenase kinase/phosphatase.